The following is a 282-amino-acid chain: Cholesterol 25-hydroxylase-like protein 1, member 1 (282 aa).

Asn-3 carries an N-linked (GlcNAc...) asparagine glycan. The next 3 helical transmembrane spans lie at Phe-40–Leu-60, Met-85–Thr-107, and Phe-127–Val-147. The Fatty acid hydroxylase domain occupies Ala-133–Thr-265. The Histidine box-1 signature appears at Trp-144–His-148. The Histidine box-2 signature appears at His-159 to His-163. Residues Ala-240–Gln-246 carry the Histidine box-3 motif.

This sequence belongs to the sterol desaturase family. It depends on Fe cation as a cofactor.

The protein localises to the endoplasmic reticulum membrane. Functionally, may catalyze the formation of 25-hydroxycholesterol from cholesterol. This Danio rerio (Zebrafish) protein is Cholesterol 25-hydroxylase-like protein 1, member 1 (ch25hl1.1).